Reading from the N-terminus, the 479-residue chain is Aspartyl/glutamyl-tRNA(Asn/Gln) amidotransferase subunit B (479 aa).

Belongs to the GatB/GatE family. GatB subfamily. In terms of assembly, heterotrimer of A, B and C subunits.

The catalysed reaction is L-glutamyl-tRNA(Gln) + L-glutamine + ATP + H2O = L-glutaminyl-tRNA(Gln) + L-glutamate + ADP + phosphate + H(+). It carries out the reaction L-aspartyl-tRNA(Asn) + L-glutamine + ATP + H2O = L-asparaginyl-tRNA(Asn) + L-glutamate + ADP + phosphate + 2 H(+). Its function is as follows. Allows the formation of correctly charged Asn-tRNA(Asn) or Gln-tRNA(Gln) through the transamidation of misacylated Asp-tRNA(Asn) or Glu-tRNA(Gln) in organisms which lack either or both of asparaginyl-tRNA or glutaminyl-tRNA synthetases. The reaction takes place in the presence of glutamine and ATP through an activated phospho-Asp-tRNA(Asn) or phospho-Glu-tRNA(Gln). In Streptococcus uberis (strain ATCC BAA-854 / 0140J), this protein is Aspartyl/glutamyl-tRNA(Asn/Gln) amidotransferase subunit B.